Reading from the N-terminus, the 421-residue chain is Mitochondrial distribution and morphology protein 10 (421 aa).

Belongs to the MDM10 family. Component of the ER-mitochondria encounter structure (ERMES) or MDM complex, composed of MMM1, MDM10, MDM12 and MDM34. Associates with the mitochondrial outer membrane sorting assembly machinery SAM(core) complex.

It localises to the mitochondrion outer membrane. In terms of biological role, component of the ERMES/MDM complex, which serves as a molecular tether to connect the endoplasmic reticulum and mitochondria. Components of this complex are involved in the control of mitochondrial shape and protein biogenesis and may function in phospholipid exchange. MDM10 is involved in the late assembly steps of the general translocase of the mitochondrial outer membrane (TOM complex). Functions in the TOM40-specific route of the assembly of outer membrane beta-barrel proteins, including the association of TOM40 with the receptor TOM22 and small TOM proteins. Can associate with the SAM(core) complex as well as the MDM12-MMM1 complex, both involved in late steps of the major beta-barrel assembly pathway, that is responsible for biogenesis of all outer membrane beta-barrel proteins. May act as a switch that shuttles between both complexes and channels precursor proteins into the TOM40-specific pathway. Plays a role in mitochondrial morphology and in the inheritance of mitochondria. The chain is Mitochondrial distribution and morphology protein 10 from Vanderwaltozyma polyspora (strain ATCC 22028 / DSM 70294 / BCRC 21397 / CBS 2163 / NBRC 10782 / NRRL Y-8283 / UCD 57-17) (Kluyveromyces polysporus).